The chain runs to 246 residues: tRNA (guanine-N(1)-)-methyltransferase (246 aa).

S-adenosyl-L-methionine is bound by residues Gly-113 and 133-138 (IGDYVL).

It belongs to the RNA methyltransferase TrmD family. Homodimer.

The protein localises to the cytoplasm. The enzyme catalyses guanosine(37) in tRNA + S-adenosyl-L-methionine = N(1)-methylguanosine(37) in tRNA + S-adenosyl-L-homocysteine + H(+). Functionally, specifically methylates guanosine-37 in various tRNAs. This is tRNA (guanine-N(1)-)-methyltransferase from Yersinia pseudotuberculosis serotype O:1b (strain IP 31758).